Here is an 82-residue protein sequence, read N- to C-terminus: ATP synthase subunit c (82 aa).

The next 2 membrane-spanning stretches (helical) occupy residues 7–27 (AASV…PGIG) and 57–77 (FAFM…LLFA).

This sequence belongs to the ATPase C chain family. F-type ATPases have 2 components, F(1) - the catalytic core - and F(0) - the membrane proton channel. F(1) has five subunits: alpha(3), beta(3), gamma(1), delta(1), epsilon(1). F(0) has four main subunits: a(1), b(1), b'(1) and c(10-14). The alpha and beta chains form an alternating ring which encloses part of the gamma chain. F(1) is attached to F(0) by a central stalk formed by the gamma and epsilon chains, while a peripheral stalk is formed by the delta, b and b' chains.

The protein localises to the cellular thylakoid membrane. In terms of biological role, f(1)F(0) ATP synthase produces ATP from ADP in the presence of a proton or sodium gradient. F-type ATPases consist of two structural domains, F(1) containing the extramembraneous catalytic core and F(0) containing the membrane proton channel, linked together by a central stalk and a peripheral stalk. During catalysis, ATP synthesis in the catalytic domain of F(1) is coupled via a rotary mechanism of the central stalk subunits to proton translocation. Key component of the F(0) channel; it plays a direct role in translocation across the membrane. A homomeric c-ring of between 10-14 subunits forms the central stalk rotor element with the F(1) delta and epsilon subunits. This chain is ATP synthase subunit c, found in Prochlorococcus marinus (strain NATL1A).